Here is a 489-residue protein sequence, read N- to C-terminus: Glutamyl-tRNA(Gln) amidotransferase subunit A (489 aa).

Residues lysine 78 and serine 153 each act as charge relay system in the active site. Residue serine 177 is the Acyl-ester intermediate of the active site.

It belongs to the amidase family. GatA subfamily. As to quaternary structure, heterotrimer of A, B and C subunits.

It catalyses the reaction L-glutamyl-tRNA(Gln) + L-glutamine + ATP + H2O = L-glutaminyl-tRNA(Gln) + L-glutamate + ADP + phosphate + H(+). In terms of biological role, allows the formation of correctly charged Gln-tRNA(Gln) through the transamidation of misacylated Glu-tRNA(Gln) in organisms which lack glutaminyl-tRNA synthetase. The reaction takes place in the presence of glutamine and ATP through an activated gamma-phospho-Glu-tRNA(Gln). The polypeptide is Glutamyl-tRNA(Gln) amidotransferase subunit A (Enterococcus faecalis (strain ATCC 700802 / V583)).